Consider the following 309-residue polypeptide: Elongator complex protein 5 (309 aa).

Phosphoserine is present on residues S3 and S4.

It belongs to the ELP5 family. In terms of assembly, component of the elongator complex, which consists of ELP1/IKI3, ELP2, ELP3, ELP4, ELP5/IKI1 and ELP6. The elongator complex is composed of two copies of the Elp123 subcomplex (composed of ELP1/IKI3, ELP2 and ELP3) and two copies of the Elp456 subcomplex (composed of ELP4, ELP5/IKI1 and ELP6). The Elp123 subcomplex forms a two-lobed scaffold, which binds the Elp456 subcomplex asymmetrically. In each lobe, ELP2 is tightly sandwiched between ELP1/IKI3 and ELP3. The Elp123 subcomplex binds tRNA through ELP1/IKI3 and ELP3 and can bind 2 tRNAs simultaneously. tRNA-binding by the Elp123 subcomplex induces conformational rearrangements which precisely position the targeted anticodon base in the active site. The Elp456 subcomplex binds tRNA and has ATPase activity. Interacts with KTI11/DPH3.

It localises to the cytoplasm. Its subcellular location is the nucleus. It participates in tRNA modification; 5-methoxycarbonylmethyl-2-thiouridine-tRNA biosynthesis. Component of the elongator complex which is required for multiple tRNA modifications, including mcm5U (5-methoxycarbonylmethyl uridine), mcm5s2U (5-methoxycarbonylmethyl-2-thiouridine), and ncm5U (5-carbamoylmethyl uridine). The elongator complex catalyzes formation of carboxymethyluridine in the wobble base at position 34 in tRNAs. It functions as a gamma-toxin target (TOT); disruption of the complex confers resistance to Kluyveromyces lactis toxin zymocin (pGKL1 killer toxin). May also be involved in sensitivity to Pichia inositovora toxin. The polypeptide is Elongator complex protein 5 (IKI1) (Saccharomyces cerevisiae (strain ATCC 204508 / S288c) (Baker's yeast)).